Here is a 137-residue protein sequence, read N- to C-terminus: Integration host factor subunit beta (137 aa).

A compositionally biased stretch (basic and acidic residues) spans 75-92 (KRVPHFKAGKELRERVDR). The interval 75-137 (KRVPHFKAGK…EGGGLNLARS (63 aa)) is disordered. Gly residues predominate over residues 128 to 137 (EGGGLNLARS).

Belongs to the bacterial histone-like protein family. Heterodimer of an alpha and a beta chain.

Its function is as follows. This protein is one of the two subunits of integration host factor, a specific DNA-binding protein that functions in genetic recombination as well as in transcriptional and translational control. This chain is Integration host factor subunit beta, found in Cupriavidus pinatubonensis (strain JMP 134 / LMG 1197) (Cupriavidus necator (strain JMP 134)).